The primary structure comprises 346 residues: Putative toluene-4-sulfonate monooxygenase system iron-sulfur subunit TsaM2 (346 aa).

A Rieske domain is found at 7 to 108 (WYVAGMATDC…LVERHGLLWI (102 aa)). [2Fe-2S] cluster contacts are provided by Cys-47, His-49, Cys-66, and His-69.

Homotetramer. Part of the p-toluenesulfonate methyl-monooxygenase complex TsaBM, comprising the reductase TsaB and the oxygenase TsaM. The cofactor is [2Fe-2S] cluster.

It catalyses the reaction toluene-4-sulfonate + NADH + O2 + H(+) = 4-(hydroxymethyl)benzenesulfonate + NAD(+) + H2O. Involved in the toluene-4-sulfonate degradation pathway. Does not discriminate between the sulfonate and the carboxyl substituents and can also be involved in the p-toluenecarboxylate degradation pathway. This chain is Putative toluene-4-sulfonate monooxygenase system iron-sulfur subunit TsaM2 (tsaM2), found in Comamonas testosteroni (Pseudomonas testosteroni).